A 353-amino-acid polypeptide reads, in one-letter code: Photosystem II D2 protein (353 aa).

Thr2 carries the N-acetylthreonine modification. Thr2 carries the phosphothreonine modification. Residues 41 to 61 (CAYFALGGWLTGTTFVTSWYT) traverse the membrane as a helical segment. His118 contributes to the chlorophyll a binding site. The helical transmembrane segment at 125–141 (GFMLRQFEIARSVGLRP) threads the bilayer. Pheophytin a is bound by residues Gln130 and Asn143. Residues 153-166 (VFVSVFLIYPLGQS) form a helical membrane-spanning segment. His198 lines the chlorophyll a pocket. The chain crosses the membrane as a helical span at residues 208-228 (AALLCAIHGATVENTIFEDGD). A plastoquinone contacts are provided by His215 and Phe262. Position 215 (His215) interacts with Fe cation. Residue His269 participates in Fe cation binding. A helical transmembrane segment spans residues 279 to 295 (GLWMSAIGVVGLALNLR).

Belongs to the reaction center PufL/M/PsbA/D family. In terms of assembly, PSII is composed of 1 copy each of membrane proteins PsbA, PsbB, PsbC, PsbD, PsbE, PsbF, PsbH, PsbI, PsbJ, PsbK, PsbL, PsbM, PsbT, PsbX, PsbY, PsbZ, Psb30/Ycf12, at least 3 peripheral proteins of the oxygen-evolving complex and a large number of cofactors. It forms dimeric complexes. The cofactor is The D1/D2 heterodimer binds P680, chlorophylls that are the primary electron donor of PSII, and subsequent electron acceptors. It shares a non-heme iron and each subunit binds pheophytin, quinone, additional chlorophylls, carotenoids and lipids. There is also a Cl(-1) ion associated with D1 and D2, which is required for oxygen evolution. The PSII complex binds additional chlorophylls, carotenoids and specific lipids..

The protein localises to the plastid. Its subcellular location is the chloroplast thylakoid membrane. The catalysed reaction is 2 a plastoquinone + 4 hnu + 2 H2O = 2 a plastoquinol + O2. Photosystem II (PSII) is a light-driven water:plastoquinone oxidoreductase that uses light energy to abstract electrons from H(2)O, generating O(2) and a proton gradient subsequently used for ATP formation. It consists of a core antenna complex that captures photons, and an electron transfer chain that converts photonic excitation into a charge separation. The D1/D2 (PsbA/PsbD) reaction center heterodimer binds P680, the primary electron donor of PSII as well as several subsequent electron acceptors. D2 is needed for assembly of a stable PSII complex. The sequence is that of Photosystem II D2 protein from Staurastrum punctulatum (Green alga).